A 100-amino-acid chain; its full sequence is Nucleoid-associated protein HPSH_00175 (100 aa).

This sequence belongs to the YbaB/EbfC family. As to quaternary structure, homodimer.

The protein localises to the cytoplasm. Its subcellular location is the nucleoid. Its function is as follows. Binds to DNA and alters its conformation. May be involved in regulation of gene expression, nucleoid organization and DNA protection. The polypeptide is Nucleoid-associated protein HPSH_00175 (Helicobacter pylori (strain Shi470)).